A 22-amino-acid chain; its full sequence is IALQSPAGAARIRDYLYNELSK.

Belongs to the peptidase S14 family. In terms of assembly, component of the chloroplastic Clp protease core complex.

It catalyses the reaction Hydrolysis of proteins to small peptides in the presence of ATP and magnesium. alpha-casein is the usual test substrate. In the absence of ATP, only oligopeptides shorter than five residues are hydrolyzed (such as succinyl-Leu-Tyr-|-NHMec, and Leu-Tyr-Leu-|-Tyr-Trp, in which cleavage of the -Tyr-|-Leu- and -Tyr-|-Trp bonds also occurs).. Cleaves peptides in various proteins in a process that requires ATP hydrolysis. Has a chymotrypsin-like activity. Plays a major role in the degradation of misfolded proteins. This is Probable ATP-dependent Clp protease proteolytic subunit from Populus euphratica (Euphrates poplar).